A 790-amino-acid polypeptide reads, in one-letter code: Vacuolar protein sorting-associated protein 35B (790 aa).

The protein belongs to the VPS35 family. In terms of assembly, component of the retromer complex which consists of VPS29 (MAG1), VPS26 (VPS26A or VPS26B), VPS35 (VPS35A or VPS35B or VPS35C), VPS5/17 (SNX1 or SNX2A or SNX2B). Component of a retromer subcomplex consisting of VPS29 (MAG1), VPS26 (VPS26A or VPS26B), VPS35 (VPS35A or VPS35B or VPS35C). Expressed in siliques and maturing seeds (at protein level).

It localises to the cytoplasm. Its subcellular location is the endosome membrane. The protein localises to the prevacuolar compartment membrane. It is found in the golgi apparatus. The protein resides in the trans-Golgi network membrane. Functionally, plays a role in vesicular protein sorting. Component of the membrane-associated retromer complex which is essential in endosome-to-Golgi retrograde transport. Also involved in the efficient sorting of seed storage proteins globulin 12S and albumin 2S. The VPS29-VPS26-VPS35 subcomplex may be involved in recycling of specific cargos from endosome to the plasma membrane. This Arabidopsis thaliana (Mouse-ear cress) protein is Vacuolar protein sorting-associated protein 35B (VPS35B).